The following is a 74-amino-acid chain: Serine rich endogenous peptide 23 (74 aa).

Positions 1-25 (MNKVVVYVLALSILLFFGLPNTTLA) are cleaved as a signal peptide. An SCOOP motif motif is present at residues 52 to 66 (KIAVGGSDSVRAHSK). Residues 58–60 (SDS) carry the SxS motif essential for MIK2 binding motif.

This sequence belongs to the serine rich endogenous peptide (SCOOP) phytocytokine family. In terms of assembly, interacts with MIK2 (via extracellular leucine-rich repeat domain); this interaction triggers the formation of complex between MIK2 and the BAK1/SERK3 and SERK4 coreceptors, and subsequent BAK1 activation by phosphorylation. As to expression, mostly expressed in roots, and, to a lower extent, in seedlings shoots.

The protein localises to the cell membrane. The protein resides in the secreted. It localises to the extracellular space. Its subcellular location is the apoplast. In terms of biological role, brassicaceae-specific phytocytokine (plant endogenous peptide released into the apoplast) perceived by MIK2 in a BAK1/SERK3 and SERK4 coreceptors-dependent manner, that modulates various physiological and antimicrobial processes including growth prevention and reactive oxygen species (ROS) response regulation. Inhibits root growth. This chain is Serine rich endogenous peptide 23, found in Arabidopsis thaliana (Mouse-ear cress).